A 479-amino-acid polypeptide reads, in one-letter code: Mitochondria-eating protein (479 aa).

Coiled coils occupy residues 109-161 and 187-223; these read ERKL…LATT and LRRL…RIAR. Disordered stretches follow at residues 220-251 and 456-479; these read RIAR…GRAR and RSRS…SRSR. Low complexity predominate over residues 235–249; it reads RSPSPLPLRSCSPGR.

It belongs to the MIEAP family.

The protein localises to the cytoplasm. Its subcellular location is the cytosol. The protein resides in the mitochondrion outer membrane. It is found in the mitochondrion matrix. Key regulator of mitochondrial quality that mediates the repairing or degradation of unhealthy mitochondria in response to mitochondrial damage. Mediator of mitochondrial protein catabolic process (also named MALM) by mediating the degradation of damaged proteins inside mitochondria by promoting the accumulation in the mitochondrial matrix of hydrolases that are characteristic of the lysosomal lumen. Also involved in mitochondrion degradation of damaged mitochondria by promoting the formation of vacuole-like structures (named MIV), which engulf and degrade unhealthy mitochondria by accumulating lysosomes. Binds cardiolipin. May form molecular condensates (non-membrane-bounded organelles) within mitochondria that compartmentalize and promote cardiolipin metabolism. The chain is Mitochondria-eating protein (SPATA18) from Gallus gallus (Chicken).